The sequence spans 378 residues: Transmembrane 6 superfamily member 2 (378 aa).

Helical transmembrane passes span 34–54, 63–83, 110–130, 140–160, 170–190, 219–239, 269–289, 291–311, and 332–352; these read LCVV…VYSL, PLYA…VIAL, IFIC…MAGA, LGLY…PGNI, PTFF…MRIF, LTLI…GLVV, MLMY…ALTF, GCSW…QAQF, and TWAT…LLAL. EXPERA domains are found at residues 61-186 and 217-351; these read YDPL…CWAG and ADLT…HLLA.

This sequence belongs to the TM6SF family.

The protein localises to the endoplasmic reticulum membrane. The protein resides in the endoplasmic reticulum-Golgi intermediate compartment membrane. Functionally, regulator of liver fat metabolism influencing triglyceride secretion and hepatic lipid droplet content. May function as sterol isomerase. The chain is Transmembrane 6 superfamily member 2 (Tm6sf2) from Rattus norvegicus (Rat).